A 109-amino-acid chain; its full sequence is Iron-sulfur cluster assembly protein CyaY (109 aa).

The protein belongs to the frataxin family.

In terms of biological role, involved in iron-sulfur (Fe-S) cluster assembly. May act as a regulator of Fe-S biogenesis. The chain is Iron-sulfur cluster assembly protein CyaY from Shewanella putrefaciens (strain CN-32 / ATCC BAA-453).